Consider the following 879-residue polypeptide: Band 4.1-like protein 1 (879 aa).

The interval 1-88 (MTTETGPDSE…TPSKAQKSPQ (88 aa)) is disordered. Over residues 17–35 (ETPQQPEAAAAVTTPVTPA) the composition is skewed to low complexity. T30 carries the phosphothreonine modification. Over residues 38 to 50 (SHPETNSNEKHLT) the composition is skewed to basic and acidic residues. S75 is subject to Phosphoserine. The segment covering 76–87 (ERTTPSKAQKSP) has biased composition (polar residues). Residue T79 is modified to Phosphothreonine. An FERM domain is found at 97 to 378 (AICRVTLLDA…EHHTFFRLVS (282 aa)). Residue Y343 is modified to Phosphotyrosine. Phosphoserine is present on residues S378, S430, S437, S461, and S466. The hydrophilic stretch occupies residues 381–482 (PPPKGFLVMG…VRTPTKIKEL (102 aa)). The interval 428 to 501 (SRSLDGAEFS…HKQEFLDKPE (74 aa)) is disordered. Over residues 444-501 (ENHDAGPEGDKREDDAESGGRRSEAEEGEVRTPTKIKELKPEQETTPRHKQEFLDKPE) the composition is skewed to basic and acidic residues. T475 carries the phosphothreonine modification. The spectrin--actin-binding stretch occupies residues 483–541 (KPEQETTPRHKQEFLDKPEDVLLKHQASINELKRTLKEPNSKLIHRDRDWDRERRLPSS). S510 is subject to Phosphoserine. The span at 514–538 (LKRTLKEPNSKLIHRDRDWDRERRL) shows a compositional bias: basic and acidic residues. Residues 514–594 (LKRTLKEPNS…QDQERDAVFL (81 aa)) are disordered. Phosphoserine occurs at positions 540, 541, 544, and 546. T550 bears the Phosphothreonine mark. Over residues 550 to 577 (TPEKASERAGLREGSEEKVKPPRPRAPE) the composition is skewed to basic and acidic residues. A phosphoserine mark is found at S564, S578, S639, S648, S650, S665, S666, S671, S677, and S684. Residues 657–696 (FAQDLKGPSSQEDESGGLEDSPDRGACSTPEMPQFESVKA) are disordered. Residue T685 is modified to Phosphothreonine. Residues S721, S782, and S868 each carry the phosphoserine modification. The segment at 743–879 (PCITTETIST…EERDKKPQES (137 aa)) is C-terminal (CTD).

As to quaternary structure, interacts with AGAP2. Highest expression in brain, also present in kidney, olfactory epithelium, retina, sensory ganglia, gastrointestinal tract (only enteric neurons) and lung.

It localises to the cytoplasm. The protein localises to the cytoskeleton. Functionally, may function to confer stability and plasticity to neuronal membrane via multiple interactions, including the spectrin-actin-based cytoskeleton, integral membrane channels and membrane-associated guanylate kinases. This chain is Band 4.1-like protein 1, found in Mus musculus (Mouse).